We begin with the raw amino-acid sequence, 316 residues long: C1GALT1-specific chaperone 1 (316 aa).

Over 1 to 6 (MLSESS) the chain is Cytoplasmic. Residues 7–26 (SFLKGVMLGSIFCALITMLG) traverse the membrane as a helical; Signal-anchor for type II membrane protein segment. Residues 27-316 (HIRIGNRMHH…FLPPNGSEND (290 aa)) are Lumenal-facing.

The protein belongs to the glycosyltransferase 31 family. Beta3-Gal-T subfamily. Associates with core 1 beta-3-galactosyltransferase (C1GALT1), probably not with the soluble active form.

The protein resides in the membrane. Functionally, probable chaperone required for the generation of 1 O-glycan Gal-beta1-3GalNAc-alpha1-Ser/Thr (T antigen), which is a precursor for many extended O-glycans in glycoproteins. Probably acts as a specific molecular chaperone assisting the folding/stability of core 1 beta-3-galactosyltransferase (C1GALT1). This Rattus norvegicus (Rat) protein is C1GALT1-specific chaperone 1 (C1galt1c1).